A 396-amino-acid chain; its full sequence is 1-deoxy-D-xylulose 5-phosphate reductoisomerase (396 aa).

NADPH-binding residues include T15, G16, S17, I18, G41, and N129. K130 serves as a coordination point for 1-deoxy-D-xylulose 5-phosphate. NADPH is bound at residue E131. Position 155 (D155) interacts with Mn(2+). 4 residues coordinate 1-deoxy-D-xylulose 5-phosphate: S156, E157, S182, and H205. E157 contacts Mn(2+). G211 lines the NADPH pocket. S218, N223, K224, and E227 together coordinate 1-deoxy-D-xylulose 5-phosphate. E227 contributes to the Mn(2+) binding site.

This sequence belongs to the DXR family. It depends on Mg(2+) as a cofactor. Mn(2+) is required as a cofactor.

It catalyses the reaction 2-C-methyl-D-erythritol 4-phosphate + NADP(+) = 1-deoxy-D-xylulose 5-phosphate + NADPH + H(+). The protein operates within isoprenoid biosynthesis; isopentenyl diphosphate biosynthesis via DXP pathway; isopentenyl diphosphate from 1-deoxy-D-xylulose 5-phosphate: step 1/6. Its function is as follows. Catalyzes the NADPH-dependent rearrangement and reduction of 1-deoxy-D-xylulose-5-phosphate (DXP) to 2-C-methyl-D-erythritol 4-phosphate (MEP). In Xanthomonas campestris pv. campestris (strain 8004), this protein is 1-deoxy-D-xylulose 5-phosphate reductoisomerase.